The chain runs to 230 residues: Ribulose-phosphate 3-epimerase (230 aa).

Residue S10 participates in substrate binding. H35, D37, and H68 together coordinate a divalent metal cation. D37 (proton acceptor) is an active-site residue. Residues H68, 146-149 (GFGG), 179-181 (DGG), and 201-202 (GS) each bind substrate. D179 provides a ligand contact to a divalent metal cation. Residue D179 is the Proton donor of the active site.

Belongs to the ribulose-phosphate 3-epimerase family. In terms of assembly, homohexamer. The cofactor is a divalent metal cation.

The enzyme catalyses D-ribulose 5-phosphate = D-xylulose 5-phosphate. The protein operates within carbohydrate degradation. Functionally, catalyzes the reversible epimerization of D-ribulose 5-phosphate to D-xylulose 5-phosphate. The protein is Ribulose-phosphate 3-epimerase of Synechocystis sp. (strain ATCC 27184 / PCC 6803 / Kazusa).